Here is a 228-residue protein sequence, read N- to C-terminus: Translin (228 aa).

The segment at 86–90 is DNA/RNA binding; sequence RFHEH. The tract at residues 177 to 198 is leucine-zipper; sequence LDSGFRLLNLKNDSLRKRYDGL. Lys187 carries the N6-acetyllysine modification. The residue at position 190 (Ser190) is a Phosphoserine. An N6-acetyllysine modification is found at Lys199.

This sequence belongs to the translin family. As to quaternary structure, ring-shaped heterooctamer of six TSN and two TSNAX subunits, DNA/RNA binding occurs inside the ring.

It localises to the cytoplasm. Its subcellular location is the nucleus. Its function is as follows. DNA-binding protein that specifically recognizes consensus sequences at the breakpoint junctions in chromosomal translocations, mostly involving immunoglobulin (Ig)/T-cell receptor gene segments. Seems to recognize single-stranded DNA ends generated by staggered breaks occurring at recombination hot spots. Exhibits both single-stranded and double-stranded endoribonuclease activity. May act as an activator of RNA-induced silencing complex (RISC) by facilitating endonucleolytic cleavage of the siRNA passenger strand. This Cricetulus griseus (Chinese hamster) protein is Translin (TSN).